An 83-amino-acid chain; its full sequence is Sulfur carrier protein TusA (83 aa).

The active-site Cysteine persulfide intermediate is Cys-20.

This sequence belongs to the sulfur carrier protein TusA family.

It localises to the cytoplasm. In terms of biological role, sulfur carrier protein which probably makes part of a sulfur-relay system. This is Sulfur carrier protein TusA from Pseudoalteromonas atlantica (strain T6c / ATCC BAA-1087).